A 512-amino-acid chain; its full sequence is ATP synthase subunit alpha (512 aa).

169-176 (GDRQTGKT) is a binding site for ATP.

Belongs to the ATPase alpha/beta chains family. In terms of assembly, F-type ATPases have 2 components, CF(1) - the catalytic core - and CF(0) - the membrane proton channel. CF(1) has five subunits: alpha(3), beta(3), gamma(1), delta(1), epsilon(1). CF(0) has three main subunits: a(1), b(2) and c(9-12). The alpha and beta chains form an alternating ring which encloses part of the gamma chain. CF(1) is attached to CF(0) by a central stalk formed by the gamma and epsilon chains, while a peripheral stalk is formed by the delta and b chains.

It is found in the cell inner membrane. It catalyses the reaction ATP + H2O + 4 H(+)(in) = ADP + phosphate + 5 H(+)(out). Functionally, produces ATP from ADP in the presence of a proton gradient across the membrane. The alpha chain is a regulatory subunit. The protein is ATP synthase subunit alpha of Rickettsia akari (strain Hartford).